We begin with the raw amino-acid sequence, 320 residues long: D-amino-acid oxidase (320 aa).

Residues alanine 13, glycine 14, valine 15, threonine 42, threonine 43, serine 44, glycine 48, and alanine 49 each contribute to the FAD site. The D-proline site is built by tyrosine 220 and arginine 274. Residues tyrosine 220 and arginine 274 each contribute to the D-serine site. Positions 274, 299, 300, 302, and 304 each coordinate FAD. Glycine 300 contacts D-proline. Glycine 300 is a D-serine binding site.

The protein belongs to the DAMOX/DASOX family. The cofactor is FAD.

Its subcellular location is the cytoplasm. The protein resides in the secreted. The protein localises to the cell wall. It catalyses the reaction a D-alpha-amino acid + O2 + H2O = a 2-oxocarboxylate + H2O2 + NH4(+). Functionally, catalyzes the oxidative deamination of D-amino acids with broad substrate specificity. Enables the organism to utilize D-amino acids as a source of nutrients. Enables the organism to utilize glycine as a carbon source. This chain is D-amino-acid oxidase, found in Mycobacterium tuberculosis (strain ATCC 25177 / H37Ra).